The chain runs to 446 residues: Serine decarboxylase 3 (446 aa).

H162 contributes to the substrate binding site. K274 carries the post-translational modification N6-(pyridoxal phosphate)lysine.

This sequence belongs to the group II decarboxylase family. Pyridoxal 5'-phosphate is required as a cofactor.

It carries out the reaction L-serine + H(+) = ethanolamine + CO2. In terms of biological role, catalyzes the biosynthesis of ethanolamine from serine. Decarboxylation of free serine is the major source of ethanolamine production in plants and ethanolamine metabolism is crucial for the synthesis of choline, phosphatidylethanolamine (PE) and phosphatidylcholine (PC), and thus for plant growth. The polypeptide is Serine decarboxylase 3 (Oryza sativa subsp. japonica (Rice)).